The following is a 209-amino-acid chain: Probable GTP-binding protein EngB (209 aa).

The EngB-type G domain occupies 22-198 (TPLEIAFVGR…NRTVGSWLDA (177 aa)). Ser37 and Thr59 together coordinate Mg(2+).

The protein belongs to the TRAFAC class TrmE-Era-EngA-EngB-Septin-like GTPase superfamily. EngB GTPase family. The cofactor is Mg(2+).

In terms of biological role, necessary for normal cell division and for the maintenance of normal septation. This is Probable GTP-binding protein EngB from Neisseria meningitidis serogroup B (strain ATCC BAA-335 / MC58).